The following is a 90-amino-acid chain: YcgL domain-containing protein Spro_2755 (90 aa).

A YcgL domain is found at 1–85; it reads MLCVIYRSSK…PLENLLKQHL (85 aa).

The protein is YcgL domain-containing protein Spro_2755 of Serratia proteamaculans (strain 568).